Reading from the N-terminus, the 210-residue chain is Orotate phosphoribosyltransferase (210 aa).

5-phospho-alpha-D-ribose 1-diphosphate-binding positions include R96, K100, H102, and 122-130; that span reads EDLISTGGS. Position 126 (S126) interacts with orotate.

It belongs to the purine/pyrimidine phosphoribosyltransferase family. PyrE subfamily. Homodimer. Mg(2+) is required as a cofactor.

It carries out the reaction orotidine 5'-phosphate + diphosphate = orotate + 5-phospho-alpha-D-ribose 1-diphosphate. It functions in the pathway pyrimidine metabolism; UMP biosynthesis via de novo pathway; UMP from orotate: step 1/2. Catalyzes the transfer of a ribosyl phosphate group from 5-phosphoribose 1-diphosphate to orotate, leading to the formation of orotidine monophosphate (OMP). This is Orotate phosphoribosyltransferase from Streptococcus pneumoniae (strain ATCC BAA-255 / R6).